The primary structure comprises 120 residues: Large ribosomal subunit protein uL18 (120 aa).

It belongs to the universal ribosomal protein uL18 family. As to quaternary structure, part of the 50S ribosomal subunit; part of the 5S rRNA/L5/L18/L25 subcomplex. Contacts the 5S and 23S rRNAs.

Its function is as follows. This is one of the proteins that bind and probably mediate the attachment of the 5S RNA into the large ribosomal subunit, where it forms part of the central protuberance. The sequence is that of Large ribosomal subunit protein uL18 from Bacillus cereus (strain G9842).